A 320-amino-acid polypeptide reads, in one-letter code: Malate dehydrogenase (320 aa).

NAD(+) contacts are provided by residues 10–15 (GAGQIG) and D34. 2 residues coordinate substrate: R83 and R89. NAD(+) is bound by residues N96 and 119 to 121 (ITN). Residues N121 and R152 each coordinate substrate. The active-site Proton acceptor is the H176.

It belongs to the LDH/MDH superfamily. MDH type 3 family.

The enzyme catalyses (S)-malate + NAD(+) = oxaloacetate + NADH + H(+). Catalyzes the reversible oxidation of malate to oxaloacetate. The sequence is that of Malate dehydrogenase from Methylobacterium radiotolerans (strain ATCC 27329 / DSM 1819 / JCM 2831 / NBRC 15690 / NCIMB 10815 / 0-1).